The sequence spans 84 residues: Replication regulatory protein repA2 (84 aa).

Residues 1–13 (MSQTENAVTSSSG) show a composition bias toward polar residues. A disordered region spans residues 1 to 31 (MSQTENAVTSSSGAKRAYRKGNPLSDAEKQR).

Functionally, this protein is involved in the determination of copy number in gene replication. It binds to the repA promoter thus inhibiting the synthesis of the mRNA for the initiator protein RepA. The polypeptide is Replication regulatory protein repA2 (repA2) (Escherichia coli).